We begin with the raw amino-acid sequence, 1158 residues long: Voltage-gated inwardly rectifying potassium channel KCNH2 (1158 aa).

Over 1-402 (MPVRRGHVAP…RIHRWTILHY (402 aa)) the chain is Cytoplasmic. Positions 17 to 88 (TIIRKFEGQS…AAQIAQALLG (72 aa)) constitute a PAS domain. The 53-residue stretch at 92 to 144 (RKVEIAFYRKDGSCFLCLVDVVPVKNEDGAVIMFILNFEVVMEKDMVGSPTHD) folds into the PAC domain. Residues 232-314 (RALVGSSSPP…GAMHPLRGGL (83 aa)) form a disordered region. Position 239 is a phosphoserine (serine 239). Residues 258-269 (PDASGSSCSLAR) are compositionally biased toward polar residues. Phosphoserine is present on residues serine 283, serine 284, serine 319, and serine 350. A helical transmembrane segment spans residues 403–423 (SPFKAVWDWLILLLVIYTAVF). At 424–449 (TPYSAAFLLKETEEGPPAPDCGYACQ) the chain is on the extracellular side. Residues 450–470 (PLAVVDFIVDIMFIVDILINF) traverse the membrane as a helical segment. Over 471–494 (RTTYVNANEEVVSHPGRIAVHYFK) the chain is Cytoplasmic. A helical membrane pass occupies residues 495 to 515 (GWFLIDMVAAIPFDLLIFGSG). Residues 516 to 519 (SEEL) lie on the Extracellular side of the membrane. A helical; Voltage-sensor membrane pass occupies residues 520-540 (IGLLKTARLLRLVRVARKLDR). The Cytoplasmic segment spans residues 541–546 (YSEYGA). The helical transmembrane segment at 547–567 (AVLFLLMCTFALIAHWLACIW) threads the bilayer. Residues 568–610 (YAIGNMEQPHMDSRIGWLHNLGDQIGKPYNSSGLGGPSIKDKY) lie on the Extracellular side of the membrane. The N-linked (GlcNAc...) asparagine glycan is linked to asparagine 597. An intramembrane region (pore-forming) is located at residues 611–631 (VTALYFTFSSLTSVGFGNVSP). The short motif at 623–628 (SVGFGN) is the Selectivity filter element. Residues 632 to 637 (NTNSEK) are Extracellular-facing. The chain crosses the membrane as a helical span at residues 638–658 (IFSICVMLIGSLMYASIFGNV). At 659–1158 (SAIIQRLYSG…LHRHGSDPGS (500 aa)) the chain is on the cytoplasmic side. Residues 741 to 841 (PFRGATKGCL…IHRDDLLEVL (101 aa)) form a cNMP-binding domain region. The disordered stretch occupies residues 869–987 (GSPGSAELEG…KSSDTCNPLS (119 aa)). Serine 870 and serine 873 each carry phosphoserine. Residues 882–891 (RQRKRKLSFR) are compositionally biased toward basic residues. The span at 910-926 (GRAGAGPSGRGRPGGPW) shows a compositional bias: gly residues. Low complexity predominate over residues 927–938 (GESPSSGPSSPE). Over residues 959 to 969 (SPRPPGEPPGG) the composition is skewed to pro residues. Arginine 1013 is modified (omega-N-methylarginine). Residues 1034-1061 (RGDVEGRLDALQRQLNRLETRLSADMAT) are a coiled coil. The tract at residues 1116–1158 (FEELPPGAPELPQDGPPRRLSLPGQLGALTSQPLHRHGSDPGS) is disordered. Phosphoserine is present on serine 1136.

Belongs to the potassium channel family. H (Eag) (TC 1.A.1.20) subfamily. Kv11.1/KCNH2 sub-subfamily. The potassium channel is probably composed of a homo- or heterotetrameric complex of pore-forming alpha subunits that can associate with modulating beta subunits. Interacts with DNAJB12 and DNAJB14; chaperones DNAJB12 and DNAJB14 promote tetramerization. Heteromultimer with KCNH6/ERG2 and KCNH7/ERG3. Interacts with ALG10B. Forms a stable complex with KCNE1 or KCNE2, and that this heteromultimerization regulates Inward rectifier potassium channel activity. Interacts with CANX. The core-glycosylated, but not the fully glycosylated form interacts with RNF207. Interacts with NDFIP1 and NDFIP2; this interaction decreases the cell membrane expression by targeting KCNH2, through interaction with NEDD4L, for the degradation through the multivesicular bodies (MVBs)-lysosomal pathway. In terms of processing, phosphorylated on serine and threonine residues. Phosphorylation by PKA inhibits ion conduction. As to expression, highly expressed in left and right atria of the heart, in cortex and hippocampus; detected at intermediate levels in left and right ventricle, Purkinje fibers, cerebellum, thalamus and basal ganglia; detected at low levels in liver, spleen and kidney.

It is found in the cell membrane. The catalysed reaction is K(+)(in) = K(+)(out). In terms of biological role, pore-forming (alpha) subunit of voltage-gated inwardly rectifying potassium channel. Characterized by unusual gating kinetics by producing relatively small outward currents during membrane depolarization and large inward currents during subsequent repolarization which reflect a rapid inactivation during depolarization and quick recovery from inactivation but slow deactivation (closing) during repolarization. Channel properties are modulated by cAMP and subunit assembly. Forms a stable complex with KCNE1 or KCNE2, and that this heteromultimerization regulates inward rectifier potassium channel activity. The sequence is that of Voltage-gated inwardly rectifying potassium channel KCNH2 from Canis lupus familiaris (Dog).